Reading from the N-terminus, the 425-residue chain is MQVELADRAAARPSETGEAPPSSPAAAAAASAAAEDAPLLPGGGGGVRRRVVVSERFRQRSGSFRREVRRAAEETYLLTRLTLILLRYLGIGYRWIRQFLALCCYTFLLMPGFIQVVYYYFFSSQVCRSVVYGEQPRNRLDLYIPTDRTGLKPVVAFVTGGAWIIGYKGWGALLGRRLAERGILVACIDYRNFPQGTIGDMVEDASQGIAFVCNNIASYGGDPERIYLVGQSAGAHIAACTLLHQAIKESGEGDASTWSIAQLKAYFGISGGYNLLNLVDHFHKRGLYRSIFLSIMEGEESLQKFSPLVMVKDPAARSAVSLLPRIFLFHGTSDYSIPSAESEAFFDALQQNGAKADLFLYDGKTHTDLFLQDPLRGGRDKLLEEIVTVIHNDNPDTSAQHLAVPVARRLVPEFMLMLAGRVSPF.

Residues 1–10 are compositionally biased toward basic and acidic residues; it reads MQVELADRAA. Positions 1 to 42 are disordered; the sequence is MQVELADRAAARPSETGEAPPSSPAAAAAASAAAEDAPLLPG. Residues 24–34 show a composition bias toward low complexity; the sequence is PAAAAAASAAA. 2 helical membrane passes run 99–119 and 154–174; these read FLAL…VVYY and VVAF…GALL. Residues 160–162 and 231–233 contribute to the substrate site; these read GGA and QSA. Residues Ser232, Asp334, and His366 contribute to the active site.

Belongs to the AB hydrolase superfamily. Isoprenylcysteine methylesterase family.

Its subcellular location is the endoplasmic reticulum membrane. It is found in the golgi apparatus membrane. It catalyses the reaction [protein]-C-terminal S-[(2E,6E)-farnesyl]-L-cysteine methyl ester + H2O = [protein]-C-terminal S-[(2E,6E)-farnesyl]-L-cysteine + methanol + H(+). In terms of biological role, catalyzes the demethylation of isoprenylcysteine methylesters. The protein is Probable isoprenylcysteine alpha-carbonyl methylesterase ICMEL1 (IMCEL1) of Oryza sativa subsp. japonica (Rice).